The primary structure comprises 441 residues: Velvet complex subunit B (441 aa).

The region spanning 1-173 (MSTLGQGDFE…SDQGVRLRLR (173 aa)) is the Velvet domain. 3 disordered regions span residues 200–220 (GYLP…PHHL), 234–295 (RSRS…ETDT), and 341–396 (MPSP…PSYA). 2 stretches are compositionally biased toward low complexity: residues 272-283 (DGASPDSPHPSS) and 361-375 (PAGA…FSPG).

It belongs to the velvet family. VelB subfamily. In terms of assembly, component of the heterotrimeric velvet complex composed of laeA, veA and velB; VeA acting as a bridging protein between laeA and velB.

The protein resides in the nucleus. Its subcellular location is the cytoplasm. Functionally, component of the velvet transcription factor complex that controls sexual/asexual developmental ratio in response to light, promoting sexual development in the darkness while stimulating asexual sporulation under illumination. The velvet complex acts as a global regulator for secondary metabolite gene expression and is required for the production of chaetoglobosin A. The chain is Velvet complex subunit B from Chaetomium globosum (strain ATCC 6205 / CBS 148.51 / DSM 1962 / NBRC 6347 / NRRL 1970) (Soil fungus).